We begin with the raw amino-acid sequence, 293 residues long: MFSGSIPALATPFRDGAFDEATFRRLVDWQIESGSSALVPCGTTGEASTLSNAEHHRVIEVCIEQAAGRVPVIAGCGSNDTRNALLHMNFSKKAGAAAGLCVAPYYNRPSQAGLIAHFSFLAENSDLPIVLYNVPSRTVTDIEDETVVELVTKYPDRIVAIKDASGDLSRVADHRMGIGRDFCQLSGNDELWLPHSAAGGSGAISVTANVAPALCAEFHSAIAANELARARELNDRLFPLHYAMFSDASPAPVKYALSRVMEEFTDEVRLPIVSASEASRKAVDEALEHAGLI.

T44 contacts pyruvate. Residue Y132 is the Proton donor/acceptor of the active site. Catalysis depends on K162, which acts as the Schiff-base intermediate with substrate. I204 is a pyruvate binding site.

The protein belongs to the DapA family. In terms of assembly, homotetramer; dimer of dimers.

The protein resides in the cytoplasm. The enzyme catalyses L-aspartate 4-semialdehyde + pyruvate = (2S,4S)-4-hydroxy-2,3,4,5-tetrahydrodipicolinate + H2O + H(+). Its pathway is amino-acid biosynthesis; L-lysine biosynthesis via DAP pathway; (S)-tetrahydrodipicolinate from L-aspartate: step 3/4. In terms of biological role, catalyzes the condensation of (S)-aspartate-beta-semialdehyde [(S)-ASA] and pyruvate to 4-hydroxy-tetrahydrodipicolinate (HTPA). The sequence is that of 4-hydroxy-tetrahydrodipicolinate synthase from Erythrobacter litoralis (strain HTCC2594).